The following is a 263-amino-acid chain: Granzyme K (263 aa).

The signal sequence occupies residues 1–21 (MRFSSWALVSLVAGVYMSSEC). Positions 22-25 (FHTE) are cleaved as a propeptide — activation peptide. One can recognise a Peptidase S1 domain in the interval 26 to 258 (IIGGREVQPH…YQTWIKSKLA (233 aa)). C51 and C67 are joined by a disulfide. Catalysis depends on charge relay system residues H66 and D115. Cystine bridges form between C148/C219, C180/C198, and C209/C233. S213 serves as the catalytic Charge relay system.

The protein belongs to the peptidase S1 family. Granzyme subfamily.

It is found in the cytoplasmic granule. This Mus musculus (Mouse) protein is Granzyme K (Gzmk).